We begin with the raw amino-acid sequence, 402 residues long: Nicotinate phosphoribosyltransferase (402 aa).

H224 bears the Phosphohistidine; by autocatalysis mark.

The protein belongs to the NAPRTase family. Transiently phosphorylated on a His residue during the reaction cycle. Phosphorylation strongly increases the affinity for substrates and increases the rate of nicotinate D-ribonucleotide production. Dephosphorylation regenerates the low-affinity form of the enzyme, leading to product release.

The catalysed reaction is nicotinate + 5-phospho-alpha-D-ribose 1-diphosphate + ATP + H2O = nicotinate beta-D-ribonucleotide + ADP + phosphate + diphosphate. It functions in the pathway cofactor biosynthesis; NAD(+) biosynthesis; nicotinate D-ribonucleotide from nicotinate: step 1/1. Functionally, catalyzes the synthesis of beta-nicotinate D-ribonucleotide from nicotinate and 5-phospho-D-ribose 1-phosphate at the expense of ATP. This is Nicotinate phosphoribosyltransferase from Neisseria meningitidis serogroup C (strain 053442).